A 508-amino-acid polypeptide reads, in one-letter code: Light-independent protochlorophyllide reductase subunit B (508 aa).

D36 contributes to the [4Fe-4S] cluster binding site. Residue D294 is the Proton donor of the active site. 429–430 provides a ligand contact to substrate; the sequence is GM.

Belongs to the ChlB/BchB/BchZ family. Protochlorophyllide reductase is composed of three subunits; ChlL, ChlN and ChlB. Forms a heterotetramer of two ChlB and two ChlN subunits. Requires [4Fe-4S] cluster as cofactor.

The enzyme catalyses chlorophyllide a + oxidized 2[4Fe-4S]-[ferredoxin] + 2 ADP + 2 phosphate = protochlorophyllide a + reduced 2[4Fe-4S]-[ferredoxin] + 2 ATP + 2 H2O. It participates in porphyrin-containing compound metabolism; chlorophyll biosynthesis (light-independent). Component of the dark-operative protochlorophyllide reductase (DPOR) that uses Mg-ATP and reduced ferredoxin to reduce ring D of protochlorophyllide (Pchlide) to form chlorophyllide a (Chlide). This reaction is light-independent. The NB-protein (ChlN-ChlB) is the catalytic component of the complex. This chain is Light-independent protochlorophyllide reductase subunit B, found in Nostoc sp. (strain PCC 7120 / SAG 25.82 / UTEX 2576).